Consider the following 1142-residue polypeptide: Zinc finger MYM-type protein 1 (1142 aa).

Lysine 25 participates in a covalent cross-link: Glycyl lysine isopeptide (Lys-Gly) (interchain with G-Cter in SUMO2). 3 consecutive MYM-type zinc fingers follow at residues 110–148 (QLFC…PKDV), 160–203 (KTFC…QYEV), and 210–245 (HNLC…SSSL). A Glycyl lysine isopeptide (Lys-Gly) (interchain with G-Cter in SUMO2) cross-link involves residue lysine 284. The MYM-type 4 zinc-finger motif lies at 300–331 (ELFCSINCFSAYSKAKMESSSVSVVSVVHDTS). Polar residues predominate over residues 385 to 396 (KSSPSEPSNAVA). A disordered region spans residues 385–413 (KSSPSEPSNAVASSSTEQPSVSPSSSVFS). The span at 397–413 (SSSTEQPSVSPSSSVFS) shows a compositional bias: low complexity. Residues 452-538 (KSRSIKKSCC…YQFCDGAVSD (87 aa)) form a TTF-type zinc finger.

It localises to the nucleus. The polypeptide is Zinc finger MYM-type protein 1 (ZMYM1) (Homo sapiens (Human)).